Here is a 371-residue protein sequence, read N- to C-terminus: 4-hydroxy-3-methylbut-2-en-1-yl diphosphate synthase (flavodoxin) (371 aa).

C270, C273, C305, and E312 together coordinate [4Fe-4S] cluster.

Belongs to the IspG family. It depends on [4Fe-4S] cluster as a cofactor.

It carries out the reaction (2E)-4-hydroxy-3-methylbut-2-enyl diphosphate + oxidized [flavodoxin] + H2O + 2 H(+) = 2-C-methyl-D-erythritol 2,4-cyclic diphosphate + reduced [flavodoxin]. The protein operates within isoprenoid biosynthesis; isopentenyl diphosphate biosynthesis via DXP pathway; isopentenyl diphosphate from 1-deoxy-D-xylulose 5-phosphate: step 5/6. Converts 2C-methyl-D-erythritol 2,4-cyclodiphosphate (ME-2,4cPP) into 1-hydroxy-2-methyl-2-(E)-butenyl 4-diphosphate. This is 4-hydroxy-3-methylbut-2-en-1-yl diphosphate synthase (flavodoxin) from Shewanella loihica (strain ATCC BAA-1088 / PV-4).